The primary structure comprises 312 residues: tRNA pseudouridine synthase B (312 aa).

The active-site Nucleophile is Asp48.

This sequence belongs to the pseudouridine synthase TruB family. Type 1 subfamily.

It carries out the reaction uridine(55) in tRNA = pseudouridine(55) in tRNA. Responsible for synthesis of pseudouridine from uracil-55 in the psi GC loop of transfer RNAs. The sequence is that of tRNA pseudouridine synthase B from Haemophilus influenzae (strain ATCC 51907 / DSM 11121 / KW20 / Rd).